The primary structure comprises 886 residues: UPF0592 membrane protein C7D4.03c (886 aa).

The segment at 87 to 112 (ILNEPYNESPSSSSSDSSSRSTSPFS) is disordered. Residues 95–112 (SPSSSSSDSSSRSTSPFS) show a composition bias toward low complexity. Helical transmembrane passes span 277 to 297 (FCAS…DHFL), 374 to 394 (GGFF…QFSF), and 400 to 420 (VIYF…LTIS).

This sequence belongs to the UPF0592 family.

The protein resides in the membrane. This Schizosaccharomyces pombe (strain 972 / ATCC 24843) (Fission yeast) protein is UPF0592 membrane protein C7D4.03c.